Reading from the N-terminus, the 350-residue chain is tRNA uridine(34) hydroxylase (350 aa).

The Rhodanese domain maps to 146-240 (DDPDALFIDM…YARKAREQGL (95 aa)). Cysteine 200 acts as the Cysteine persulfide intermediate in catalysis.

The protein belongs to the TrhO family.

The catalysed reaction is uridine(34) in tRNA + AH2 + O2 = 5-hydroxyuridine(34) in tRNA + A + H2O. Its function is as follows. Catalyzes oxygen-dependent 5-hydroxyuridine (ho5U) modification at position 34 in tRNAs, the first step in 5-carboxymethoxyuridine (cmo5U) biosynthesis. May be part of an alternate pathway, which is able to bypass cmo5U biogenesis in a subset of tRNAs under aerobic conditions. In Escherichia coli O9:H4 (strain HS), this protein is tRNA uridine(34) hydroxylase.